The following is a 278-amino-acid chain: UPF0758 protein BURPS1106A_0984 (278 aa).

The tract at residues 1–64 (MQYEIVSAGE…ATAAARRGRD (64 aa)) is disordered. Low complexity predominate over residues 22-59 (AAAPAAPSSAVPSSAALSSAALSSAAQPTGAPPATAAA). In terms of domain architecture, MPN spans 156–278 (LVDSPGAVDD…TFSFAQAGWI (123 aa)). Zn(2+)-binding residues include histidine 227, histidine 229, and aspartate 240. Residues 227–240 (HNHPSGAVRPSAAD) carry the JAMM motif motif.

The protein belongs to the UPF0758 family.

This chain is UPF0758 protein BURPS1106A_0984, found in Burkholderia pseudomallei (strain 1106a).